Here is a 318-residue protein sequence, read N- to C-terminus: Deacetoxycephalosporin C hydroxylase (318 aa).

One can recognise a Fe2OG dioxygenase domain in the interval 158 to 271 (DADPVLRLRY…RTSSVFFLRP (114 aa)).

The protein belongs to the iron/ascorbate-dependent oxidoreductase family. In terms of assembly, monomer. Requires Fe cation as cofactor.

It catalyses the reaction deacetoxycephalosporin C + 2-oxoglutarate + O2 = deacetylcephalosporin C + succinate + CO2. The protein operates within antibiotic biosynthesis; cephalosporin C biosynthesis. Hydroxylation of desacetoxicephalosporin C in 3'position to form deacetylcephalosporin C. The sequence is that of Deacetoxycephalosporin C hydroxylase (cefF) from Streptomyces clavuligerus.